The following is a 186-amino-acid chain: Crossover junction endodeoxyribonuclease RuvC (186 aa).

Residues D7, E67, and D140 contribute to the active site. Residues D7, E67, and D140 each coordinate Mg(2+).

This sequence belongs to the RuvC family. In terms of assembly, homodimer which binds Holliday junction (HJ) DNA. The HJ becomes 2-fold symmetrical on binding to RuvC with unstacked arms; it has a different conformation from HJ DNA in complex with RuvA. In the full resolvosome a probable DNA-RuvA(4)-RuvB(12)-RuvC(2) complex forms which resolves the HJ. Mg(2+) is required as a cofactor.

It localises to the cytoplasm. It catalyses the reaction Endonucleolytic cleavage at a junction such as a reciprocal single-stranded crossover between two homologous DNA duplexes (Holliday junction).. Functionally, the RuvA-RuvB-RuvC complex processes Holliday junction (HJ) DNA during genetic recombination and DNA repair. Endonuclease that resolves HJ intermediates. Cleaves cruciform DNA by making single-stranded nicks across the HJ at symmetrical positions within the homologous arms, yielding a 5'-phosphate and a 3'-hydroxyl group; requires a central core of homology in the junction. The consensus cleavage sequence is 5'-(A/T)TT(C/G)-3'. Cleavage occurs on the 3'-side of the TT dinucleotide at the point of strand exchange. HJ branch migration catalyzed by RuvA-RuvB allows RuvC to scan DNA until it finds its consensus sequence, where it cleaves and resolves the cruciform DNA. The sequence is that of Crossover junction endodeoxyribonuclease RuvC from Chloroherpeton thalassium (strain ATCC 35110 / GB-78).